A 77-amino-acid chain; its full sequence is U14-theraphotoxin-Cg1a 1 (77 aa).

An N-terminal signal peptide occupies residues Met-1–Ala-21. Positions Ser-22 to Arg-49 are excised as a propeptide. 3 disulfides stabilise this stretch: Cys-50–Cys-64, Cys-57–Cys-69, and Cys-63–Cys-75. A Lysine amide modification is found at Lys-77.

The protein belongs to the neurotoxin 10 (Hwtx-1) family. 65 (Jztx-21) subfamily. In terms of tissue distribution, expressed by the venom gland.

It localises to the secreted. In terms of biological role, probable ion channel inhibitor. The sequence is that of U14-theraphotoxin-Cg1a 1 from Chilobrachys guangxiensis (Chinese earth tiger tarantula).